Reading from the N-terminus, the 396-residue chain is Elongation factor Tu (396 aa).

The region spanning 10–206 is the tr-type G domain; sequence KPHCNIGTIG…AVDSYIPQPE (197 aa). The tract at residues 19–26 is G1; it reads GHVDHGKT. GTP is bound at residue 19-26; that stretch reads GHVDHGKT. Thr26 serves as a coordination point for Mg(2+). Positions 60–64 are G2; that stretch reads GITIS. The G3 stretch occupies residues 81–84; the sequence is DCPG. GTP-binding positions include 81–85 and 136–139; these read DCPGH and NKCD. A G4 region spans residues 136-139; it reads NKCD. Residues 174–176 form a G5 region; the sequence is SAL.

Belongs to the TRAFAC class translation factor GTPase superfamily. Classic translation factor GTPase family. EF-Tu/EF-1A subfamily. As to quaternary structure, monomer.

The protein resides in the cytoplasm. It carries out the reaction GTP + H2O = GDP + phosphate + H(+). Functionally, GTP hydrolase that promotes the GTP-dependent binding of aminoacyl-tRNA to the A-site of ribosomes during protein biosynthesis. This Rhodopseudomonas palustris (strain BisA53) protein is Elongation factor Tu.